We begin with the raw amino-acid sequence, 365 residues long: Zinc transporter 7 (365 aa).

The first 26 residues, 1-26 (MAYSKACYKLTTITILLLSFTLPSLA), serve as a signal peptide directing secretion. At 27–56 (GNAENADVSECKAESGDLSCHNNKEAQKLK) the chain is on the extracellular side. Residues 57 to 77 (IIAIPSILVASMIGVSLPLFS) traverse the membrane as a helical segment. The Cytoplasmic portion of the chain corresponds to 78–90 (RSIPALGPDREMS). Residues 91–111 (VIVKTLASGVILATGFMHVLP) traverse the membrane as a helical segment. Residues 112-129 (DSFDDLTSKCLPEDPWQK) are Extracellular-facing. Residues 130–150 (FPFATFITMISALLVLMIESF) traverse the membrane as a helical segment. The Cytoplasmic portion of the chain corresponds to 151-210 (AMCAYARRTSKREGEVVPLENGSNSVDTQNDIQTLENGSSYVEKQEKVNEDKTSELLRNK). A helical membrane pass occupies residues 211–231 (VIAQILELGIVVHSVVIGLAM). The Extracellular portion of the chain corresponds to 232 to 242 (GASDNKCTVQS). Residues 243-263 (LIAALCFHQLFEGMGLGGSIL) form a helical membrane-spanning segment. The Cytoplasmic segment spans residues 264 to 272 (QAQFKSKTN). The helical transmembrane segment at 273–293 (WTMVFFFSVTTPFGIVLGMAI) threads the bilayer. The Extracellular portion of the chain corresponds to 294–304 (QKIYDETSPTA). Residues 305 to 325 (LIVVGVLNACSAGLLIYMALV) traverse the membrane as a helical segment. The Cytoplasmic segment spans residues 326-344 (NLLAHEFFGPKIQGNIKLH). The chain crosses the membrane as a helical span at residues 345-365 (VLGYVATFTGAAGMSLMAKWA).

It belongs to the ZIP transporter (TC 2.A.5) family.

The protein localises to the cell membrane. Its function is as follows. Probably mediates zinc uptake from the rhizosphere. This Arabidopsis thaliana (Mouse-ear cress) protein is Zinc transporter 7 (ZIP7).